Here is a 200-residue protein sequence, read N- to C-terminus: Transgelin (200 aa).

N-acetylserine is present on Ser-2. Ser-11 carries the post-translational modification Phosphoserine. In terms of domain architecture, Calponin-homology (CH) spans 26 to 136 (PEAIQNIKIW…QTLKSLSRYA (111 aa)). A disordered region spans residues 144-168 (FPVLGPQLSTKKPRPPVKSKPKHLQ). An interaction with SH3 domain of ABP1 region spans residues 151-164 (LSTKKPRPPVKSKP). A compositionally biased stretch (basic residues) spans 154-165 (KKPRPPVKSKPK).

Binds to actin. Interacts with ABP1.

It localises to the cytoplasm. It is found in the cytoskeleton. The protein resides in the actin patch. Its function is as follows. Has actin-binding and actin-bundling activity. Stabilizes actin filaments against disassembly. The sequence is that of Transgelin (SCP1) from Saccharomyces cerevisiae (strain ATCC 204508 / S288c) (Baker's yeast).